The following is a 37-amino-acid chain: Large ribosomal subunit protein bL36 (37 aa).

It belongs to the bacterial ribosomal protein bL36 family.

This chain is Large ribosomal subunit protein bL36, found in Syntrophomonas wolfei subsp. wolfei (strain DSM 2245B / Goettingen).